The following is a 159-amino-acid chain: Phosphopantetheine adenylyltransferase (159 aa).

S9 contributes to the substrate binding site. Residues 9-10 and H17 each bind ATP; that span reads SF. 3 residues coordinate substrate: K41, L74, and K88. ATP-binding positions include 89-91, E99, and 123-129; these read GLR and YGYISST.

This sequence belongs to the bacterial CoaD family. In terms of assembly, homohexamer. Requires Mg(2+) as cofactor.

The protein localises to the cytoplasm. The enzyme catalyses (R)-4'-phosphopantetheine + ATP + H(+) = 3'-dephospho-CoA + diphosphate. The protein operates within cofactor biosynthesis; coenzyme A biosynthesis; CoA from (R)-pantothenate: step 4/5. Reversibly transfers an adenylyl group from ATP to 4'-phosphopantetheine, yielding dephospho-CoA (dPCoA) and pyrophosphate. This is Phosphopantetheine adenylyltransferase from Corynebacterium diphtheriae (strain ATCC 700971 / NCTC 13129 / Biotype gravis).